The primary structure comprises 137 residues: NADPH-dependent 7-cyano-7-deazaguanine reductase (137 aa).

The Thioimide intermediate role is filled by Cys45. The Proton donor role is filled by Asp52. Residues 68 to 70 and 87 to 88 each bind substrate; these read VEL and QE.

It belongs to the GTP cyclohydrolase I family. QueF type 1 subfamily.

The protein resides in the cytoplasm. The enzyme catalyses 7-aminomethyl-7-carbaguanine + 2 NADP(+) = 7-cyano-7-deazaguanine + 2 NADPH + 3 H(+). It participates in tRNA modification; tRNA-queuosine biosynthesis. Catalyzes the NADPH-dependent reduction of 7-cyano-7-deazaguanine (preQ0) to 7-aminomethyl-7-deazaguanine (preQ1). This Thermotoga petrophila (strain ATCC BAA-488 / DSM 13995 / JCM 10881 / RKU-1) protein is NADPH-dependent 7-cyano-7-deazaguanine reductase.